We begin with the raw amino-acid sequence, 441 residues long: Amino-acid acetyltransferase (441 aa).

In terms of domain architecture, N-acetyltransferase spans 295 to 434 (EQVRRATIND…QALYNYQRRS (140 aa)).

This sequence belongs to the acetyltransferase family. ArgA subfamily. Homohexamer.

It is found in the cytoplasm. The enzyme catalyses L-glutamate + acetyl-CoA = N-acetyl-L-glutamate + CoA + H(+). Its pathway is amino-acid biosynthesis; L-arginine biosynthesis; N(2)-acetyl-L-ornithine from L-glutamate: step 1/4. The protein is Amino-acid acetyltransferase of Pectobacterium carotovorum subsp. carotovorum (strain PC1).